The sequence spans 211 residues: Outer-membrane lipoprotein carrier protein (211 aa).

A signal peptide spans 1–25; it reads MRAIRMLLVSALTLGSLSATLSAHA.

Belongs to the LolA family. In terms of assembly, monomer.

It localises to the periplasm. Functionally, participates in the translocation of lipoproteins from the inner membrane to the outer membrane. Only forms a complex with a lipoprotein if the residue after the N-terminal Cys is not an aspartate (The Asp acts as a targeting signal to indicate that the lipoprotein should stay in the inner membrane). The polypeptide is Outer-membrane lipoprotein carrier protein (Pseudomonas putida (strain W619)).